The primary structure comprises 220 residues: UPF0319 protein YccT (220 aa).

The signal sequence occupies residues 1-20 (MKTGALATFLALCLPVTVFA).

Belongs to the UPF0319 family.

The chain is UPF0319 protein YccT from Salmonella agona (strain SL483).